Reading from the N-terminus, the 406-residue chain is Eukaryotic initiation factor 4A-I (406 aa).

Residues 1 to 21 form a disordered region; that stretch reads MSASQDSRSRDNGPDGMEPEG. S2 carries the post-translational modification N-acetylserine. The residue at position 4 (S4) is a Phosphoserine. Residues 32–60 carry the Q motif motif; that stretch reads DSFDDMNLSESLLRGIYAYGFEKPSAIQQ. The Helicase ATP-binding domain occupies 63-234; the sequence is ILPCIKGYDV…KKFMRDPIRI (172 aa). 76 to 83 is a binding site for ATP; sequence AQSGTGKT. At K118 the chain carries N6-acetyllysine. K146 is covalently cross-linked (Glycyl lysine isopeptide (Lys-Gly) (interchain with G-Cter in SUMO2)). Position 158 is a phosphothreonine (T158). At K174 the chain carries N6-acetyllysine. A DEAD box motif is present at residues 182-185; it reads DEAD. K193 is subject to N6-acetyllysine. K225 participates in a covalent cross-link: Glycyl lysine isopeptide (Lys-Gly) (interchain with G-Cter in SUMO2). At K238 the chain carries N6-acetyllysine; alternate. Residue K238 forms a Glycyl lysine isopeptide (Lys-Gly) (interchain with G-Cter in SUMO2); alternate linkage. A Helicase C-terminal domain is found at 245–406; sequence GIRQFYINVE…EMPLNVADLI (162 aa). Residues K309, K369, and K381 each participate in a glycyl lysine isopeptide (Lys-Gly) (interchain with G-Cter in SUMO2) cross-link.

It belongs to the DEAD box helicase family. eIF4A subfamily. As to quaternary structure, eIF4F is a multi-subunit complex, the composition of which varies with external and internal environmental conditions. It is composed of at least EIF4A, EIF4E and EIF4G1/EIF4G3. Interacts with PAIP1, EIF4E and UPF2. Found in a complex with XPO7, EIF4A1, ARHGAP1, VPS26A, VPS29, VPS35 and SFN. May interact with NOM1. Interacts with PDCD4; this interferes with the interaction between EIF4A and EIF4G. Interacts with RBM4. Interacts with DDX3X in an RNA-independent manner. Interacts with PKP1 (via N-terminus); the interaction promotes EIF4A1 recruitment to the cap-dependent translation complex and EIF4A1 ATPase activity.

It localises to the cytoplasm. Its subcellular location is the perinuclear region. The protein localises to the cell membrane. The protein resides in the stress granule. It carries out the reaction ATP + H2O = ADP + phosphate + H(+). Functionally, ATP-dependent RNA helicase which is a subunit of the eIF4F complex involved in cap recognition and is required for mRNA binding to ribosome. In the current model of translation initiation, eIF4A unwinds RNA secondary structures in the 5'-UTR of mRNAs which is necessary to allow efficient binding of the small ribosomal subunit, and subsequent scanning for the initiator codon. As a result, promotes cell proliferation and growth. The chain is Eukaryotic initiation factor 4A-I (EIF4A1) from Macaca fascicularis (Crab-eating macaque).